We begin with the raw amino-acid sequence, 307 residues long: Small ribosomal subunit protein bS1 (307 aa).

3 S1 motif domains span residues 32 to 101, 119 to 183, and 197 to 265; these read GDTV…LSIR, DATV…LSHR, and GEVV…LSTK.

This sequence belongs to the bacterial ribosomal protein bS1 family.

Binds mRNA. The chain is Small ribosomal subunit protein bS1 (rpsA) from Synechococcus sp. (strain ATCC 27144 / PCC 6301 / SAUG 1402/1) (Anacystis nidulans).